Here is a 623-residue protein sequence, read N- to C-terminus: Myosin light chain kinase 2, skeletal/cardiac muscle (623 aa).

Disordered regions lie at residues 1-179 (MATE…PSCP) and 204-251 (GVPV…QGDT). N-acetylalanine is present on Ala2. The segment covering 20 to 31 (APKAAAGEGPPA) has biased composition (low complexity). Basic and acidic residues-rich tracts occupy residues 32–43 (AEKDPGPPDPQK) and 49–89 (DPEK…EKGD). Over residues 90 to 102 (GASAQPSASSQGP) the composition is skewed to low complexity. A compositionally biased stretch (basic and acidic residues) spans 150–159 (GEAKEQKKVA). Phosphoserine is present on residues Ser169, Ser175, and Ser177. Over residues 204–214 (GVPVTPGPTET) the composition is skewed to low complexity. Basic and acidic residues predominate over residues 215-224 (EPAKVAEGEK). A Protein kinase domain is found at 312–567 (LNSKEALGGG…AAQCLAHPWL (256 aa)). Residues 318-326 (LGGGKFGAV) and Lys341 contribute to the ATP site. The Proton acceptor role is filled by Asp433. At Thr472 the chain carries Phosphothreonine. The segment at 601-613 (IAVSAANRFKKIS) is calmodulin-binding.

The protein belongs to the protein kinase superfamily. CAMK Ser/Thr protein kinase family. In terms of assembly, may interact with centrin.

It is found in the cytoplasm. It catalyses the reaction L-seryl-[myosin light chain] + ATP = O-phospho-L-seryl-[myosin light chain] + ADP + H(+). The enzyme catalyses L-threonyl-[myosin light chain] + ATP = O-phospho-L-threonyl-[myosin light chain] + ADP + H(+). In terms of biological role, implicated in the level of global muscle contraction and cardiac function. Phosphorylates a specific serine in the N-terminus of a myosin light chain. The chain is Myosin light chain kinase 2, skeletal/cardiac muscle (MYLK2) from Bos taurus (Bovine).